A 275-amino-acid polypeptide reads, in one-letter code: Elongation factor Ts (275 aa).

The involved in Mg(2+) ion dislocation from EF-Tu stretch occupies residues 80 to 83 (TDFV).

The protein belongs to the EF-Ts family.

The protein resides in the cytoplasm. Associates with the EF-Tu.GDP complex and induces the exchange of GDP to GTP. It remains bound to the aminoacyl-tRNA.EF-Tu.GTP complex up to the GTP hydrolysis stage on the ribosome. This is Elongation factor Ts from Clavibacter sepedonicus (Clavibacter michiganensis subsp. sepedonicus).